Reading from the N-terminus, the 418-residue chain is Synaptotagmin-15 (418 aa).

Residues 1 to 4 lie on the Extracellular side of the membrane; it reads MAEQ. The chain crosses the membrane as a helical; Signal-anchor for type III membrane protein span at residues 5–27; sequence LAFLIGGIIGGLLLLIGVSCCLW. Residues 28 to 418 are Cytoplasmic-facing; it reads RRFCATFTYE…WHALCRPTEP (391 aa). C2 domains are found at residues 144 to 261 and 275 to 396; these read CLGR…HRII and EFGD…EHWG.

This sequence belongs to the synaptotagmin family. In terms of assembly, homodimer. As to expression, isoform 1 and isoform 2 are expressed in heart, lung, skeletal muscle and testis; not detected in brain, liver and kidney. Isoform 1 is expressed in spleen.

It is found in the membrane. Its function is as follows. May be involved in the trafficking and exocytosis of secretory vesicles in non-neuronal tissues. The protein is Synaptotagmin-15 (Syt15) of Mus musculus (Mouse).